The primary structure comprises 176 residues: MTRGPVDVLIRLLDPDVPIPSYGHPGDAGADLVTTEAAELAPGERAVLPTGVSIALPDGYAAFVHPRSGLAARCGVALVNAPGTVDAGYRGEIKVIVVNLDPRESVRFERFDRIAQLVVQQVEKVRFHEVAELPGSARAEGGFGSTGGHASVDGAEGGITHGGNSYASVVSDREGQ.

Substrate contacts are provided by residues 67 to 69, asparagine 80, 84 to 86, and lysine 94; these read RSG and TVD. A disordered region spans residues 141–176; the sequence is GGFGSTGGHASVDGAEGGITHGGNSYASVVSDREGQ.

Belongs to the dUTPase family. The cofactor is Mg(2+).

The enzyme catalyses dUTP + H2O = dUMP + diphosphate + H(+). It participates in pyrimidine metabolism; dUMP biosynthesis; dUMP from dCTP (dUTP route): step 2/2. This enzyme is involved in nucleotide metabolism: it produces dUMP, the immediate precursor of thymidine nucleotides and it decreases the intracellular concentration of dUTP so that uracil cannot be incorporated into DNA. This Streptomyces griseus subsp. griseus (strain JCM 4626 / CBS 651.72 / NBRC 13350 / KCC S-0626 / ISP 5235) protein is Deoxyuridine 5'-triphosphate nucleotidohydrolase.